A 429-amino-acid chain; its full sequence is 3-phosphoshikimate 1-carboxyvinyltransferase (429 aa).

3-phosphoshikimate-binding residues include lysine 20, serine 21, and arginine 25. Residue lysine 20 coordinates phosphoenolpyruvate. Glycine 89 and arginine 118 together coordinate phosphoenolpyruvate. The 3-phosphoshikimate site is built by serine 164, serine 165, glutamine 166, serine 192, aspartate 311, and lysine 338. Glutamine 166 lines the phosphoenolpyruvate pocket. Aspartate 311 serves as the catalytic Proton acceptor. Phosphoenolpyruvate is bound by residues arginine 342 and arginine 384.

It belongs to the EPSP synthase family. Monomer.

It localises to the cytoplasm. The enzyme catalyses 3-phosphoshikimate + phosphoenolpyruvate = 5-O-(1-carboxyvinyl)-3-phosphoshikimate + phosphate. It participates in metabolic intermediate biosynthesis; chorismate biosynthesis. In terms of biological role, catalyzes the transfer of the enolpyruvyl moiety of phosphoenolpyruvate (PEP) to the 5-hydroxyl of shikimate-3-phosphate (S3P) to produce enolpyruvyl shikimate-3-phosphate and inorganic phosphate. This chain is 3-phosphoshikimate 1-carboxyvinyltransferase, found in Methanococcus maripaludis (strain C7 / ATCC BAA-1331).